We begin with the raw amino-acid sequence, 149 residues long: Arginine repressor (149 aa).

This sequence belongs to the ArgR family.

The protein localises to the cytoplasm. It participates in amino-acid biosynthesis; L-arginine biosynthesis [regulation]. Its function is as follows. Regulates arginine biosynthesis genes. This chain is Arginine repressor, found in Bacillus cereus (strain ATCC 10987 / NRS 248).